Here is a 471-residue protein sequence, read N- to C-terminus: UDP-N-acetylmuramoylalanine--D-glutamate ligase (471 aa).

122–128 (GTNGKTT) provides a ligand contact to ATP.

This sequence belongs to the MurCDEF family.

It localises to the cytoplasm. It catalyses the reaction UDP-N-acetyl-alpha-D-muramoyl-L-alanine + D-glutamate + ATP = UDP-N-acetyl-alpha-D-muramoyl-L-alanyl-D-glutamate + ADP + phosphate + H(+). It participates in cell wall biogenesis; peptidoglycan biosynthesis. In terms of biological role, cell wall formation. Catalyzes the addition of glutamate to the nucleotide precursor UDP-N-acetylmuramoyl-L-alanine (UMA). This Streptomyces coelicolor (strain ATCC BAA-471 / A3(2) / M145) protein is UDP-N-acetylmuramoylalanine--D-glutamate ligase.